We begin with the raw amino-acid sequence, 858 residues long: Toll-like receptor 5 (858 aa).

An N-terminal signal peptide occupies residues 1–20 (MGDHLDLLLGVVLMAGPVFG). Over 21–639 (IPSCSFDGRI…DEEEVLKSLK (619 aa)) the chain is Extracellular. N-linked (GlcNAc...) asparagine glycosylation is found at Asn37 and Asn46. LRR repeat units follow at residues 45–68 (LNTTERLLLSFNYIRTVTASSFPF), 71–93 (QLQLLELGSQYTPLTIDKEAFRN), 95–117 (PNLRILDLGSSKIYFLHPDAFQG), 120–143 (HLFELRLYFCGLSDAVLKDGYFRN), 146–166 (ALTRLDLSKNQIRSLYLHPSF), 171–192 (SLKSIDFSSNQIFLVCEHELEP), 197–211 (TLSFFSLAANSLYSR), 214–229 (VDWGKCMNPFRNMVLE), and 234–235 (SG). An N-linked (GlcNAc...) asparagine glycan is attached at Asn245. LRR repeat units follow at residues 260-284 (LAHHIMGAGFGFHNIKDPDQNTFAG), 289-301 (SVRHLDLSHGFVF), 313-334 (DLKVLNLAYNKINKIADEAFYG), 337-355 (NLQVLNLSYNLLGELYSSN), 385-401 (KLQTLDLRDNALTTIHF), 412-431 (GNKLVTLPKINLTANLIHLS), 449-470 (HLQILILNQNRFSSCSGDQTPS), 474-495 (SLEQLFLGENMLQLAWETELCW), 503-524 (HLQVLYLNHNYLNSLPPGVFSH), 527-546 (ALRGLSLNSNRLTVLSHNDL), and 549-567 (NLEILDISRNQLLAPNPDV). N-linked (GlcNAc...) asparagine glycosylation occurs at Asn342. Asn422 carries an N-linked (GlcNAc...) asparagine glycan. In terms of domain architecture, LRRCT spans 579-631 (NKFICECELSTFINWLNHTNVTIAGPPADIYCVYPDSFSGVSLFSLSTEGCDE). 2 cysteine pairs are disulfide-bonded: Cys583/Cys610 and Cys585/Cys629. 2 N-linked (GlcNAc...) asparagine glycosylation sites follow: Asn595 and Asn598. Residues 640–660 (FSLFIVCTVTLTLFLMTILTV) form a helical membrane-spanning segment. The Cytoplasmic portion of the chain corresponds to 661–858 (TKFRGFCFIC…IPLQTVATIS (198 aa)). In terms of domain architecture, TIR spans 691–836 (YKYDAYLCFS…WFLHKLSQQI (146 aa)). Tyr798 is modified (phosphotyrosine). Ser805 carries the phosphoserine; by PKD/PRKD1 modification.

It belongs to the Toll-like receptor family. As to quaternary structure, homodimer. Interacts with MYD88 (via TIR domain). Interacts with TICAM1 (via TIR domain). Interacts with UNC93B1; this interaction is essential for proper TLR5 localization to the plasma membrane. In terms of processing, phosphorylated at Ser-805 by PKD/PRKD1; phosphorylation induces the production of inflammatory cytokines. Post-translationally, phosphorylated at Tyr-798 upon flagellin binding; required for signaling. In terms of tissue distribution, highly expressed on the basolateral surface of intestinal epithelia. Expressed also in other cells such as lung epithelial cells.

Its subcellular location is the cell membrane. Pattern recognition receptor (PRR) located on the cell surface that participates in the activation of innate immunity and inflammatory response. Recognizes small molecular motifs named pathogen-associated molecular pattern (PAMPs) expressed by pathogens and microbe-associated molecular patterns (MAMPs) usually expressed by resident microbiota. Upon ligand binding such as bacterial flagellins, recruits intracellular adapter proteins MYD88 and TRIF leading to NF-kappa-B activation, cytokine secretion and induction of the inflammatory response. Plays thereby an important role in the relationship between the intestinal epithelium and enteric microbes and contributes to the gut microbiota composition throughout life. The polypeptide is Toll-like receptor 5 (TLR5) (Homo sapiens (Human)).